The primary structure comprises 120 residues: MERHQHLLSEYQQILTLSEQMLMLATVENWNALVDLEMTYLKAVENTANITISSCTSPVLQELLRQKLRSILENEIEIKRLLQRRLDKLSELVGQSTRQQAVNRTYGQFPDQALLLGETQ.

The segment at 1–50 is required for homodimerization; that stretch reads MERHQHLLSEYQQILTLSEQMLMLATVENWNALVDLEMTYLKAVENTANI. Residues 60–98 form a fliD binding region; that stretch reads LQELLRQKLRSILENEIEIKRLLQRRLDKLSELVGQSTR.

Belongs to the FliT family. As to quaternary structure, homodimer. Interacts with FliD and FlhC.

The protein resides in the cytoplasm. It localises to the cytosol. In terms of biological role, dual-function protein that regulates the transcription of class 2 flagellar operons and that also acts as an export chaperone for the filament-capping protein FliD. As a transcriptional regulator, acts as an anti-FlhDC factor; it directly binds FlhC, thus inhibiting the binding of the FlhC/FlhD complex to class 2 promoters, resulting in decreased expression of class 2 flagellar operons. As a chaperone, effects FliD transition to the membrane by preventing its premature polymerization, and by directing it to the export apparatus. The sequence is that of Flagellar protein FliT from Yersinia pestis bv. Antiqua (strain Antiqua).